Reading from the N-terminus, the 602-residue chain is Prostaglandin G/H synthase 1 (602 aa).

The N-terminal stretch at 1 to 26 (MSRRSLSLQFPLLLLLLLLPPPPVLL) is a signal peptide. The EGF-like domain maps to 34–72 (PVNPCCYYPCQNQGVCVRFGLDHYQCDCTRTGYSGPNCT). 4 disulfides stabilise this stretch: Cys-38-Cys-49, Cys-39-Cys-161, Cys-43-Cys-59, and Cys-61-Cys-71. 3 N-linked (GlcNAc...) asparagine glycosylation sites follow: Asn-70, Asn-106, and Asn-146. His-209 (proton acceptor) is an active-site residue. The For cyclooxygenase activity role is filled by Tyr-387. His-390 is a heme b binding site. N-linked (GlcNAc...) asparagine glycosylation is present at Asn-412. Cys-571 and Cys-577 are oxidised to a cystine.

This sequence belongs to the prostaglandin G/H synthase family. In terms of assembly, homodimer. The cofactor is heme b.

It localises to the microsome membrane. The protein resides in the endoplasmic reticulum membrane. It catalyses the reaction (5Z,8Z,11Z,14Z)-eicosatetraenoate + AH2 + 2 O2 = prostaglandin H2 + A + H2O. The enzyme catalyses (5Z,8Z,11Z,14Z)-eicosatetraenoate + 2 O2 = prostaglandin G2. The catalysed reaction is prostaglandin G2 + AH2 = prostaglandin H2 + A + H2O. It carries out the reaction (9Z,12Z)-octadecadienoate + AH2 + O2 = (9R)-hydroxy-(10E,12Z)-octadecadienoate + A + H2O. It catalyses the reaction (9Z,12Z)-octadecadienoate + AH2 + O2 = (9S)-hydroxy-(10E,12Z)-octadecadienoate + A + H2O. The enzyme catalyses (9Z,12Z)-octadecadienoate + AH2 + O2 = (13S)-hydroxy-(9Z,11E)-octadecadienoate + A + H2O. The catalysed reaction is (9Z,12Z)-octadecadienoate + AH2 + O2 = (13R)-hydroxy-(9Z,11E)-octadecadienoate + A + H2O. It functions in the pathway lipid metabolism; prostaglandin biosynthesis. The cyclooxygenase activity is inhibited by nonsteroidal anti-inflammatory drugs (NSAIDs) including ibuprofen, flurbiprofen, ketoprofen, naproxen, flurbiprofen, anirolac, fenclofenac and diclofenac. Functionally, dual cyclooxygenase and peroxidase that plays an important role in the biosynthesis pathway of prostanoids, a class of C20 oxylipins mainly derived from arachidonate ((5Z,8Z,11Z,14Z)-eicosatetraenoate, AA, C20:4(n-6)), with a particular role in the inflammatory response. The cyclooxygenase activity oxygenates AA to the hydroperoxy endoperoxide prostaglandin G2 (PGG2), and the peroxidase activity reduces PGG2 to the hydroxy endoperoxide prostaglandin H2 (PGH2), the precursor of all 2-series prostaglandins and thromboxanes. This complex transformation is initiated by abstraction of hydrogen at carbon 13 (with S-stereochemistry), followed by insertion of molecular O2 to form the endoperoxide bridge between carbon 9 and 11 that defines prostaglandins. The insertion of a second molecule of O2 (bis-oxygenase activity) yields a hydroperoxy group in PGG2 that is then reduced to PGH2 by two electrons. Involved in the constitutive production of prostanoids in particular in the stomach and platelets. In gastric epithelial cells, it is a key step in the generation of prostaglandins, such as prostaglandin E2 (PGE2), which plays an important role in cytoprotection. In platelets, it is involved in the generation of thromboxane A2 (TXA2), which promotes platelet activation and aggregation, vasoconstriction and proliferation of vascular smooth muscle cells. Can also use linoleate (LA, (9Z,12Z)-octadecadienoate, C18:2(n-6)) as substrate and produce hydroxyoctadecadienoates (HODEs) in a regio- and stereospecific manner, being (9R)-HODE ((9R)-hydroxy-(10E,12Z)-octadecadienoate) and (13S)-HODE ((13S)-hydroxy-(9Z,11E)-octadecadienoate) its major products. In Rattus norvegicus (Rat), this protein is Prostaglandin G/H synthase 1.